Consider the following 139-residue polypeptide: Nucleoside diphosphate kinase (139 aa).

The ATP site is built by lysine 11, phenylalanine 59, arginine 87, threonine 93, arginine 104, and asparagine 114. Histidine 117 (pros-phosphohistidine intermediate) is an active-site residue.

Belongs to the NDK family. Homotetramer. It depends on Mg(2+) as a cofactor.

The protein resides in the cytoplasm. It catalyses the reaction a 2'-deoxyribonucleoside 5'-diphosphate + ATP = a 2'-deoxyribonucleoside 5'-triphosphate + ADP. The catalysed reaction is a ribonucleoside 5'-diphosphate + ATP = a ribonucleoside 5'-triphosphate + ADP. In terms of biological role, major role in the synthesis of nucleoside triphosphates other than ATP. The ATP gamma phosphate is transferred to the NDP beta phosphate via a ping-pong mechanism, using a phosphorylated active-site intermediate. The chain is Nucleoside diphosphate kinase from Wolbachia sp. subsp. Brugia malayi (strain TRS).